The primary structure comprises 168 residues: Protein OPG162 (168 aa).

At 1-14 (MKSLNRQTVSRFKK) the chain is on the intravirion side. The chain crosses the membrane as a helical span at residues 15–37 (LSVPAAIMMILSTIISGIGTFLH). The Virion surface segment spans residues 38–168 (YKEELMPSAC…SVLCVKRFYK (131 aa)). One can recognise a C-type lectin domain in the interval 54 to 163 (YDKHCYLDTN…CKSTQSVLCV (110 aa)). Intrachain disulfides connect C75–C162 and C141–C154. The N-linked (GlcNAc...) asparagine; by host glycan is linked to N133.

Belongs to the orthopoxvirus OPG162 protein family. As to quaternary structure, interacts with protein OPG161. Interacts with protein OPG164. Interacts with protein OPG190.

Its subcellular location is the virion membrane. The protein localises to the host Golgi apparatus. Its function is as follows. Forms a complex with OPG162 and OPG190 to coordinate the incorporation of OPG164 into wrapped enveloped virion (EV) membranes and, subsequently, the production of actin tails. Therefore plays an essential role in efficient cell-to-cell spread of viral particles. In Variola virus (isolate Human/India/Ind3/1967) (VARV), this protein is Protein OPG162 (OPG162).